Here is a 430-residue protein sequence, read N- to C-terminus: T-kininogen 2 (430 aa).

The N-terminal stretch at 1–18 is a signal peptide; sequence MKLITILLLCSRLLPSLA. Q19 carries the pyrrolidone carboxylic acid modification. In terms of domain architecture, Cystatin kininogen-type 1 spans 28–131; the sequence is CNDETVFQAV…TQICNITPGK (104 aa). Disulfide bonds link C28–C404, C83–C94, C107–C125, C141–C144, C205–C217, C228–C247, C263–C266, C327–C339, and C350–C369. N82 carries an N-linked (GlcNAc...) asparagine glycan. A Cystatin kininogen-type 2 domain is found at 150–253; that stretch reads MDSSDLKPVL…SQSCDLYPGD (104 aa). N168 and N204 each carry an N-linked (GlcNAc...) asparagine glycan. The region spanning 272-375 is the Cystatin kininogen-type 3 domain; that stretch reads VDSPELKEAL…TVRCQALDMM (104 aa). N-linked (GlcNAc...) asparagine glycosylation is present at N326. Residues 410-430 form a disordered region; that stretch reads LSKAGAGPAPDHQAEASTVTP.

In terms of processing, as T-kinin is preceded by a Met instead of an Arg or Lys, it is not released from its precursor by either tissue or plasma kallikrein. Plasma.

The protein localises to the secreted. It localises to the extracellular space. Kininogens are plasma glycoproteins with a number of functions: (1) as precursor of the active peptide bradykinin they effect smooth muscle contraction, induction of hypotension and increase of vascular permeability. (2) They play a role in blood coagulation by helping to position optimally prekallikrein and factor XI next to factor XII. (3) They are inhibitor of thiol proteases. This is T-kininogen 2 from Rattus norvegicus (Rat).